Reading from the N-terminus, the 627-residue chain is 1-deoxy-D-xylulose-5-phosphate synthase (627 aa).

Residues His-76 and 117–119 (SHA) each bind thiamine diphosphate. Asp-148 contacts Mg(2+). Thiamine diphosphate-binding positions include 149 to 150 (GA), Asn-178, Phe-288, and Glu-370. Position 178 (Asn-178) interacts with Mg(2+).

Belongs to the transketolase family. DXPS subfamily. Homodimer. Requires Mg(2+) as cofactor. Thiamine diphosphate is required as a cofactor.

It carries out the reaction D-glyceraldehyde 3-phosphate + pyruvate + H(+) = 1-deoxy-D-xylulose 5-phosphate + CO2. It participates in metabolic intermediate biosynthesis; 1-deoxy-D-xylulose 5-phosphate biosynthesis; 1-deoxy-D-xylulose 5-phosphate from D-glyceraldehyde 3-phosphate and pyruvate: step 1/1. Functionally, catalyzes the acyloin condensation reaction between C atoms 2 and 3 of pyruvate and glyceraldehyde 3-phosphate to yield 1-deoxy-D-xylulose-5-phosphate (DXP). The sequence is that of 1-deoxy-D-xylulose-5-phosphate synthase from Cutibacterium acnes (strain DSM 16379 / KPA171202) (Propionibacterium acnes).